Consider the following 319-residue polypeptide: HTH-type transcriptional regulator YidZ (319 aa).

Residues 8-65 (LDLNLLLCLQLLMQERSVTKAAKRMNVTPSAVSKSLSKLRTWFDDPLFVNTPLGLTPT) enclose the HTH lysR-type domain. A DNA-binding region (H-T-H motif) is located at residues 25 to 44 (VTKAAKRMNVTPSAVSKSLS).

The protein belongs to the LysR transcriptional regulatory family.

In terms of biological role, involved in anaerobic NO protection. In Citrobacter koseri (strain ATCC BAA-895 / CDC 4225-83 / SGSC4696), this protein is HTH-type transcriptional regulator YidZ.